Consider the following 389-residue polypeptide: Phospho-N-acetylmuramoyl-pentapeptide-transferase (389 aa).

Helical transmembrane passes span arginine 25–isoleucine 45, threonine 73–leucine 93, phenylalanine 97–tyrosine 117, phenylalanine 135–alanine 155, isoleucine 190–alanine 210, glycine 222–methionine 242, glycine 258–tryptophan 278, valine 286–isoleucine 306, isoleucine 311–valine 331, and glutamine 366–leucine 386.

The protein belongs to the glycosyltransferase 4 family. MraY subfamily. It depends on Mg(2+) as a cofactor.

The protein resides in the cell inner membrane. It catalyses the reaction UDP-N-acetyl-alpha-D-muramoyl-L-alanyl-gamma-D-glutamyl-meso-2,6-diaminopimeloyl-D-alanyl-D-alanine + di-trans,octa-cis-undecaprenyl phosphate = di-trans,octa-cis-undecaprenyl diphospho-N-acetyl-alpha-D-muramoyl-L-alanyl-D-glutamyl-meso-2,6-diaminopimeloyl-D-alanyl-D-alanine + UMP. The protein operates within cell wall biogenesis; peptidoglycan biosynthesis. In terms of biological role, catalyzes the initial step of the lipid cycle reactions in the biosynthesis of the cell wall peptidoglycan: transfers peptidoglycan precursor phospho-MurNAc-pentapeptide from UDP-MurNAc-pentapeptide onto the lipid carrier undecaprenyl phosphate, yielding undecaprenyl-pyrophosphoryl-MurNAc-pentapeptide, known as lipid I. The protein is Phospho-N-acetylmuramoyl-pentapeptide-transferase of Burkholderia cenocepacia (strain HI2424).